The chain runs to 389 residues: Acyl-[acyl-carrier-protein] dehydrogenase MbtN (389 aa).

This sequence belongs to the acyl-CoA dehydrogenase family. It depends on FAD as a cofactor.

It participates in siderophore biosynthesis; mycobactin biosynthesis. In terms of biological role, catalyzes the dehydrogenation at the alpha-beta position of ACP-bound acyl chains. This results in the introduction of a double bond in the lipidic chain, which is further transferred to the epsilon-amino group of lysine residue in the mycobactin core by MbtK. This Mycobacterium sp. (strain MCS) protein is Acyl-[acyl-carrier-protein] dehydrogenase MbtN (mbtN).